Consider the following 39-residue polypeptide: Photosystem II reaction center protein J (39 aa).

Residues 7–27 (IPLWLIATVGGTAALTVVGLF) traverse the membrane as a helical segment.

It belongs to the PsbJ family. As to quaternary structure, PSII is composed of 1 copy each of membrane proteins PsbA, PsbB, PsbC, PsbD, PsbE, PsbF, PsbH, PsbI, PsbJ, PsbK, PsbL, PsbM, PsbT, PsbX, PsbY, PsbZ, Psb30/Ycf12, at least 3 peripheral proteins of the oxygen-evolving complex and a large number of cofactors. It forms dimeric complexes.

The protein localises to the plastid. It is found in the chloroplast thylakoid membrane. One of the components of the core complex of photosystem II (PSII). PSII is a light-driven water:plastoquinone oxidoreductase that uses light energy to abstract electrons from H(2)O, generating O(2) and a proton gradient subsequently used for ATP formation. It consists of a core antenna complex that captures photons, and an electron transfer chain that converts photonic excitation into a charge separation. The protein is Photosystem II reaction center protein J of Rhodomonas salina (Cryptomonas salina).